The primary structure comprises 65 residues: Light-harvesting protein B800/830/1020 alpha-2 chain (65 aa).

Residues 1–13 (MWKLWKFVDFRMT) are Cytoplasmic-facing. Residues 14 to 34 (AVGFHIFFALIAFAVHFACIS) form a helical membrane-spanning segment. His29 lines the a bacteriochlorophyll pocket. The Periplasmic segment spans residues 35–65 (SERFNWLEGAPAAEYYMDENPGIWKRTSYDG).

It belongs to the antenna complex alpha subunit family. As to quaternary structure, the core complex is formed by different alpha and beta chains, binding bacteriochlorophyll molecules, and arranged most probably in tetrameric structures disposed around the reaction center. The non-pigmented gamma chains may constitute additional components.

The protein resides in the cell inner membrane. Its function is as follows. Antenna complexes are light-harvesting systems, which transfer the excitation energy to the reaction centers. In Halorhodospira halochloris (Ectothiorhodospira halochloris), this protein is Light-harvesting protein B800/830/1020 alpha-2 chain.